Reading from the N-terminus, the 355-residue chain is UDP-N-acetylglucosamine--N-acetylmuramyl-(pentapeptide) pyrophosphoryl-undecaprenol N-acetylglucosamine transferase (355 aa).

UDP-N-acetyl-alpha-D-glucosamine-binding positions include 11-13 (TGG), N120, R161, S188, and Q280.

The protein belongs to the glycosyltransferase 28 family. MurG subfamily.

The protein resides in the cell inner membrane. The enzyme catalyses di-trans,octa-cis-undecaprenyl diphospho-N-acetyl-alpha-D-muramoyl-L-alanyl-D-glutamyl-meso-2,6-diaminopimeloyl-D-alanyl-D-alanine + UDP-N-acetyl-alpha-D-glucosamine = di-trans,octa-cis-undecaprenyl diphospho-[N-acetyl-alpha-D-glucosaminyl-(1-&gt;4)]-N-acetyl-alpha-D-muramoyl-L-alanyl-D-glutamyl-meso-2,6-diaminopimeloyl-D-alanyl-D-alanine + UDP + H(+). The protein operates within cell wall biogenesis; peptidoglycan biosynthesis. Its function is as follows. Cell wall formation. Catalyzes the transfer of a GlcNAc subunit on undecaprenyl-pyrophosphoryl-MurNAc-pentapeptide (lipid intermediate I) to form undecaprenyl-pyrophosphoryl-MurNAc-(pentapeptide)GlcNAc (lipid intermediate II). The polypeptide is UDP-N-acetylglucosamine--N-acetylmuramyl-(pentapeptide) pyrophosphoryl-undecaprenol N-acetylglucosamine transferase (Prochlorococcus marinus (strain MIT 9211)).